The primary structure comprises 313 residues: Type I restriction enzyme EcoprrI endonuclease subunit (313 aa).

This sequence belongs to the HsdR family. As to quaternary structure, the type I restriction/modification system is composed of three polypeptides R, M and S; the restriction enzyme has stoichiometry R(2)M(2)S(1) while the methyltransferase is M(2)S(1).

It catalyses the reaction Endonucleolytic cleavage of DNA to give random double-stranded fragments with terminal 5'-phosphates, ATP is simultaneously hydrolyzed.. The subtype C restriction (R) subunit of a type I restriction enzyme that recognizes 5'-CCAN(7)RTGC-3' and cleaves a random distance away. The R subunit is required for both endonuclease and ATPase activities but not for modification. Cleaves only non-methylated DNA, hemi-methylated and fully methylated DNA are not substrates. After locating a non-methylated recognition site, the enzyme complex serves as a molecular motor that translocates DNA in an ATP-dependent manner until a collision occurs that triggers cleavage. The prr locus restricts phage T4 mutants lacking polynucleotide kinase or RNA ligase; T4 mutants lacking these genes manifest a T4-induced anticodon nuclease (ACNase). This is a putative 'masking-agent' for the ACNase encoded by prrC. It is thought that Stp and other T4-encoded ACNase factors counteract the masking agents, thus activating the latent ACNase. In Escherichia coli, this protein is Type I restriction enzyme EcoprrI endonuclease subunit.